Here is a 284-residue protein sequence, read N- to C-terminus: Avenin-like b6 (284 aa).

The N-terminal stretch at 1 to 18 (MKVFILALLALAATTAIA) is a signal peptide.

The protein belongs to the prolamin family. Post-translationally, contains disulfide bonds.

In terms of biological role, seed storage protein. Might be integrated via inter-chain disulfide bonds within the glutenin polymer. The polypeptide is Avenin-like b6 (Triticum aestivum (Wheat)).